A 336-amino-acid polypeptide reads, in one-letter code: Large ribosomal subunit protein uL10 (336 aa).

Residues 305–336 (AVVATEEAPKAETKKEEKKEEAAPAAGLGLLF) are disordered. Basic and acidic residues predominate over residues 311–326 (EAPKAETKKEEKKEEA).

It belongs to the universal ribosomal protein uL10 family. Part of the 50S ribosomal subunit. Forms part of the ribosomal stalk which helps the ribosome interact with GTP-bound translation factors. Forms a heptameric L10(L12)2(L12)2(L12)2 complex, where L10 forms an elongated spine to which the L12 dimers bind in a sequential fashion.

In terms of biological role, forms part of the ribosomal stalk, playing a central role in the interaction of the ribosome with GTP-bound translation factors. This is Large ribosomal subunit protein uL10 from Methanococcus vannielii (strain ATCC 35089 / DSM 1224 / JCM 13029 / OCM 148 / SB).